The sequence spans 196 residues: Large ribosomal subunit protein bL9 (196 aa).

This sequence belongs to the bacterial ribosomal protein bL9 family.

Functionally, binds to the 23S rRNA. The chain is Large ribosomal subunit protein bL9 from Gluconobacter oxydans (strain 621H) (Gluconobacter suboxydans).